We begin with the raw amino-acid sequence, 332 residues long: Ketol-acid reductoisomerase (NADP(+)) (332 aa).

A KARI N-terminal Rossmann domain is found at 1–182; that stretch reads MATIYRDKDA…GGTRAGVLET (182 aa). Residues 25–28, Lys-49, Ser-51, and 83–86 each bind NADP(+); these read YGNQ and DELQ. The active site involves His-108. Gly-134 is an NADP(+) binding site. The 146-residue stretch at 183–328 folds into the KARI C-terminal knotted domain; that stretch reads TFAEETETDL…AELRAMMPWL (146 aa). Mg(2+)-binding residues include Asp-191, Glu-195, Glu-227, and Glu-231. A substrate-binding site is contributed by Ser-252.

This sequence belongs to the ketol-acid reductoisomerase family. Requires Mg(2+) as cofactor.

The catalysed reaction is (2R)-2,3-dihydroxy-3-methylbutanoate + NADP(+) = (2S)-2-acetolactate + NADPH + H(+). It carries out the reaction (2R,3R)-2,3-dihydroxy-3-methylpentanoate + NADP(+) = (S)-2-ethyl-2-hydroxy-3-oxobutanoate + NADPH + H(+). It functions in the pathway amino-acid biosynthesis; L-isoleucine biosynthesis; L-isoleucine from 2-oxobutanoate: step 2/4. Its pathway is amino-acid biosynthesis; L-valine biosynthesis; L-valine from pyruvate: step 2/4. Its function is as follows. Involved in the biosynthesis of branched-chain amino acids (BCAA). Catalyzes an alkyl-migration followed by a ketol-acid reduction of (S)-2-acetolactate (S2AL) to yield (R)-2,3-dihydroxy-isovalerate. In the isomerase reaction, S2AL is rearranged via a Mg-dependent methyl migration to produce 3-hydroxy-3-methyl-2-ketobutyrate (HMKB). In the reductase reaction, this 2-ketoacid undergoes a metal-dependent reduction by NADPH to yield (R)-2,3-dihydroxy-isovalerate. The sequence is that of Ketol-acid reductoisomerase (NADP(+)) from Methanothrix thermoacetophila (strain DSM 6194 / JCM 14653 / NBRC 101360 / PT) (Methanosaeta thermophila).